A 406-amino-acid polypeptide reads, in one-letter code: 4-hydroxy-3-methylbut-2-en-1-yl diphosphate synthase (ferredoxin) (406 aa).

The [4Fe-4S] cluster site is built by Cys-315, Cys-318, Cys-349, and Glu-356.

It belongs to the IspG family. It depends on [4Fe-4S] cluster as a cofactor.

The catalysed reaction is (2E)-4-hydroxy-3-methylbut-2-enyl diphosphate + 2 oxidized [2Fe-2S]-[ferredoxin] + H2O = 2-C-methyl-D-erythritol 2,4-cyclic diphosphate + 2 reduced [2Fe-2S]-[ferredoxin] + H(+). It participates in isoprenoid biosynthesis; isopentenyl diphosphate biosynthesis via DXP pathway; isopentenyl diphosphate from 1-deoxy-D-xylulose 5-phosphate: step 5/6. Functionally, converts 2C-methyl-D-erythritol 2,4-cyclodiphosphate (ME-2,4cPP) into 1-hydroxy-2-methyl-2-(E)-butenyl 4-diphosphate. This chain is 4-hydroxy-3-methylbut-2-en-1-yl diphosphate synthase (ferredoxin), found in Trichodesmium erythraeum (strain IMS101).